The following is a 370-amino-acid chain: Protein-tyrosine sulfotransferase 1 (370 aa).

Over 1-8 (MVGKLKQN) the chain is Cytoplasmic. Residues 9-25 (LLLACLVISSVTVFYLG) form a helical; Signal-anchor for type II membrane protein membrane-spanning segment. At 26-370 (QHAMECHHRI…KEKPQTEQVE (345 aa)) the chain is on the lumenal side. Residue Asn-60 is glycosylated (N-linked (GlcNAc...) asparagine). 79-83 (RSGTT) is a 3'-phosphoadenylyl sulfate binding site. Cys-97 and Cys-157 are oxidised to a cystine. Glu-100 serves as the catalytic Proton donor/acceptor. The interval 102 to 106 (RVIPR) is interaction with peptide substrate. Residues Arg-184, Ser-192, and Arg-196 each coordinate 3'-phosphoadenylyl sulfate. Cysteines 226 and 234 form a disulfide. Residue Tyr-239 coordinates 3'-phosphoadenylyl sulfate. Residue Asn-262 is glycosylated (N-linked (GlcNAc...) asparagine). 3'-phosphoadenylyl sulfate is bound by residues 286–295 (STDQVIKPVN) and Lys-301.

Belongs to the protein sulfotransferase family. In terms of assembly, homodimer. Can also form heterodimers with TPST2. In terms of processing, N-glycosylated. Ubiquitous. Detected in heart, brain, lung, liver, spleen, kidney, skeletal muscle and testis.

The protein localises to the golgi apparatus membrane. The catalysed reaction is L-tyrosyl-[protein] + 3'-phosphoadenylyl sulfate = O-sulfo-L-tyrosine-[protein] + adenosine 3',5'-bisphosphate + H(+). Its function is as follows. Catalyzes the O-sulfation of tyrosine residues within acidic motifs of polypeptides, using 3'-phosphoadenylyl sulfate (PAPS) as cosubstrate. This is Protein-tyrosine sulfotransferase 1 (Tpst1) from Mus musculus (Mouse).